A 312-amino-acid polypeptide reads, in one-letter code: Aspartoacylase (312 aa).

Residues H20 and E23 each contribute to the Zn(2+) site. R62, N69, and R70 together coordinate N-acetyl-L-aspartate. H115 serves as a coordination point for Zn(2+). 2 residues coordinate N-acetyl-L-aspartate: Y163 and R167. The Proton donor/acceptor role is filled by E177. Residue Y287 coordinates N-acetyl-L-aspartate.

Belongs to the AspA/AstE family. Aspartoacylase subfamily. In terms of assembly, homodimer. It depends on Zn(2+) as a cofactor. Detected in kidney proximal tubule cells (at protein level).

It localises to the cytoplasm. Its subcellular location is the nucleus. It catalyses the reaction an N-acyl-L-aspartate + H2O = a carboxylate + L-aspartate. The enzyme catalyses N-acetyl-L-aspartate + H2O = L-aspartate + acetate. In terms of biological role, catalyzes the deacetylation of N-acetylaspartic acid (NAA) to produce acetate and L-aspartate. NAA occurs in high concentration in brain and its hydrolysis NAA plays a significant part in the maintenance of intact white matter. In other tissues it acts as a scavenger of NAA from body fluids. The polypeptide is Aspartoacylase (Rattus norvegicus (Rat)).